We begin with the raw amino-acid sequence, 458 residues long: Probable threonine--tRNA ligase, cytoplasmic (458 aa).

In terms of domain architecture, TGS spans aspartate 41–glycine 104.

It belongs to the class-II aminoacyl-tRNA synthetase family.

The protein resides in the cytoplasm. The catalysed reaction is tRNA(Thr) + L-threonine + ATP = L-threonyl-tRNA(Thr) + AMP + diphosphate + H(+). The polypeptide is Probable threonine--tRNA ligase, cytoplasmic (Arabidopsis thaliana (Mouse-ear cress)).